Reading from the N-terminus, the 665-residue chain is Succinate dehydrogenase [ubiquinone] flavoprotein subunit B, mitochondrial (665 aa).

The N-terminal 45 residues, 1–45 (MALLKVAPSRLLSRALQLTSTLQNCTATSIAARRNFHFTVYGRKD), are a transit peptide targeting the mitochondrion. The FAD site is built by alanine 72, alanine 75, threonine 94, lysine 95, and serine 101. Histidine 102 carries the tele-8alpha-FAD histidine modification. Positions 103, 108, 224, and 278 each coordinate FAD. Residues histidine 299, arginine 343, and histidine 410 each coordinate oxaloacetate. Arginine 343 acts as the Proton acceptor in catalysis. Glutamate 443 provides a ligand contact to FAD. 2 residues coordinate oxaloacetate: arginine 454 and alanine 457. 2 residues coordinate FAD: serine 459 and leucine 460.

This sequence belongs to the FAD-dependent oxidoreductase 2 family. FRD/SDH subfamily. In terms of assembly, component of complex II composed of four subunits: a flavoprotein (FP), an iron-sulfur protein (IP), and a cytochrome b composed of a large and a small subunit. It depends on FAD as a cofactor.

The protein localises to the mitochondrion inner membrane. The enzyme catalyses a ubiquinone + succinate = a ubiquinol + fumarate. It catalyses the reaction (R)-malate + a quinone = enol-oxaloacetate + a quinol. The catalysed reaction is (S)-malate + a quinone = enol-oxaloacetate + a quinol. It functions in the pathway carbohydrate metabolism; tricarboxylic acid cycle; fumarate from succinate (eukaryal route): step 1/1. Enol-oxaloacetate inhibits the succinate dehydrogenase activity. Flavoprotein (FP) subunit of succinate dehydrogenase (SDH) that is involved in complex II of the mitochondrial electron transport chain and is responsible for transferring electrons from succinate to ubiquinone (coenzyme Q). SDH also oxidizes malate to the non-canonical enol form of oxaloacetate, enol-oxaloacetate. Enol-oxaloacetate, which is a potent inhibitor of the succinate dehydrogenase activity, is further isomerized into keto-oxaloacetate. This is Succinate dehydrogenase [ubiquinone] flavoprotein subunit B, mitochondrial (sdha-b) from Xenopus laevis (African clawed frog).